A 92-amino-acid polypeptide reads, in one-letter code: Signal recognition particle 19 kDa protein (92 aa).

Belongs to the SRP19 family. As to quaternary structure, part of the signal recognition particle protein translocation system, which is composed of SRP and FtsY. Archaeal SRP consists of a 7S RNA molecule of 300 nucleotides and two protein subunits: SRP54 and SRP19.

It is found in the cytoplasm. Involved in targeting and insertion of nascent membrane proteins into the cytoplasmic membrane. Binds directly to 7S RNA and mediates binding of the 54 kDa subunit of the SRP. The polypeptide is Signal recognition particle 19 kDa protein (Haloarcula marismortui (strain ATCC 43049 / DSM 3752 / JCM 8966 / VKM B-1809) (Halobacterium marismortui)).